A 309-amino-acid chain; its full sequence is Glutaminase (309 aa).

Residues Ser-64, Asn-114, Glu-160, Asn-167, Tyr-191, Tyr-243, and Val-261 each coordinate substrate.

Belongs to the glutaminase family. Homotetramer.

The catalysed reaction is L-glutamine + H2O = L-glutamate + NH4(+). In Methylorubrum extorquens (strain CM4 / NCIMB 13688) (Methylobacterium extorquens), this protein is Glutaminase.